Consider the following 732-residue polypeptide: Prolyl 3-hydroxylase 3 (732 aa).

The signal sequence occupies residues 1–19 (MLRLLRLLLLLLLPPPGSP). Residues 15–25 (PPGSPEPPEPP) show a composition bias toward pro residues. The disordered stretch occupies residues 15–35 (PPGSPEPPEPPGLAQLSPGSP). TPR repeat units lie at residues 39 to 72 (PDLL…RAAL), 152 to 185 (REPY…NPTH), 214 to 247 (YWAA…SLAH), and 312 to 345 (LSQL…YPED). N-linked (GlcNAc...) asparagine glycans are attached at residues N327 and N458. A Fe2OG dioxygenase domain is found at 557-671 (THLVCRSAIE…RCALALWHTW (115 aa)). Residues H580, D582, and H652 each coordinate Fe cation. The active site involves R662. Positions 674–703 (EHSEQEWTEAKELLQEEEEEEEEEDILSRD) form a coiled coil. The segment covering 676–687 (SEQEWTEAKELL) has biased composition (basic and acidic residues). Residues 676–732 (SEQEWTEAKELLQEEEEEEEEEDILSRDPSPEPPSHKLQRVQEKAGKPRRVRVREEL) are disordered. Acidic residues predominate over residues 688-698 (QEEEEEEEEED). Positions 722–732 (KPRRVRVREEL) are enriched in basic residues. The short motif at 729–732 (REEL) is the Prevents secretion from ER element.

It belongs to the leprecan family. In terms of assembly, identified in a complex with PLOD1 and P3H4. It depends on Fe cation as a cofactor. Requires L-ascorbate as cofactor. In terms of tissue distribution, detected in kidney (at protein level).

It localises to the endoplasmic reticulum. It carries out the reaction L-prolyl-[collagen] + 2-oxoglutarate + O2 = trans-3-hydroxy-L-prolyl-[collagen] + succinate + CO2. In terms of biological role, part of a complex composed of PLOD1, P3H3 and P3H4 that catalyzes hydroxylation of lysine residues in collagen alpha chains and is required for normal assembly and cross-linkling of collagen fibrils. Required for normal hydroxylation of lysine residues in type I collagen chains in skin, bone, tendon, aorta and cornea. Required for normal skin stability via its role in hydroxylation of lysine residues in collagen alpha chains and in collagen fibril assembly. Apparently not required for normal prolyl 3-hydroxylation on collagen chains, possibly because it functions redundantly with other prolyl 3-hydroxylases. This is Prolyl 3-hydroxylase 3 from Mus musculus (Mouse).